The chain runs to 301 residues: Phosducin-like protein (301 aa).

T2 is modified (N-acetylthreonine). Residues S18–T57 are disordered. A phosphoserine mark is found at S20 and S25. Low complexity predominate over residues A36–A49. A Phosducin domain is found at A36–E299. 3 positions are modified to phosphoserine: S226, S293, and S296.

It belongs to the phosducin family. Forms a complex with the beta and gamma subunits of the GTP-binding protein, transducin. Interacts with the CCT chaperonin complex.

Its subcellular location is the cell projection. The protein localises to the cilium. Acts as a positive regulator of hedgehog signaling and regulates ciliary function. Functionally, functions as a co-chaperone for CCT in the assembly of heterotrimeric G protein complexes, facilitates the assembly of both Gbeta-Ggamma and RGS-Gbeta5 heterodimers. Its function is as follows. Acts as a negative regulator of heterotrimeric G proteins assembly by trapping the preloaded G beta subunits inside the CCT chaperonin. This Homo sapiens (Human) protein is Phosducin-like protein (PDCL).